Reading from the N-terminus, the 211-residue chain is Interleukin-6 (211 aa).

A signal peptide spans 1 to 25 (MNSLSTSTFSPVAFSLGLLLVMATA). C71 and C77 are oxidised to a cystine. S80 is modified (phosphoserine). Cysteines 100 and 110 form a disulfide.

It belongs to the IL-6 superfamily. As to quaternary structure, component of a hexamer of two molecules each of IL6, IL6R and IL6ST; first binds to IL6R to associate with the signaling subunit IL6ST. Interacts with IL6R (via the N-terminal ectodomain); this interaction may be affected by IL6R-binding with SORL1, hence decreasing IL6 cis signaling. Interacts with SORL1 (via the N-terminal ectodomain); this interaction leads to IL6 internalization and lysosomal degradation. May form a trimeric complex with the soluble SORL1 ectodomain and soluble IL6R receptor; this interaction might stabilize circulating IL6, hence promoting IL6 trans signaling.

It localises to the secreted. Functionally, cytokine with a wide variety of biological functions in immunity, tissue regeneration, and metabolism. Binds to IL6R, then the complex associates to the signaling subunit IL6ST/gp130 to trigger the intracellular IL6-signaling pathway. The interaction with the membrane-bound IL6R and IL6ST stimulates 'classic signaling', whereas the binding of IL6 and soluble IL6R to IL6ST stimulates 'trans-signaling'. Alternatively, 'cluster signaling' occurs when membrane-bound IL6:IL6R complexes on transmitter cells activate IL6ST receptors on neighboring receiver cells. In terms of biological role, IL6 is a potent inducer of the acute phase response. Rapid production of IL6 contributes to host defense during infection and tissue injury, but excessive IL6 synthesis is involved in disease pathology. In the innate immune response, is synthesized by myeloid cells, such as macrophages and dendritic cells, upon recognition of pathogens through toll-like receptors (TLRs) at the site of infection or tissue injury. In the adaptive immune response, is required for the differentiation of B cells into immunoglobulin-secreting cells. Plays a major role in the differentiation of CD4(+) T cell subsets. Essential factor for the development of T follicular helper (Tfh) cells that are required for the induction of germinal-center formation. Required to drive naive CD4(+) T cells to the Th17 lineage. Also required for proliferation of myeloma cells and the survival of plasmablast cells. Acts as an essential factor in bone homeostasis and on vessels directly or indirectly by induction of VEGF, resulting in increased angiogenesis activity and vascular permeability. Induces, through 'trans-signaling' and synergistically with IL1B and TNF, the production of VEGF. Involved in metabolic controls, is discharged into the bloodstream after muscle contraction increasing lipolysis and improving insulin resistance. 'Trans-signaling' in central nervous system also regulates energy and glucose homeostasis. Mediates, through GLP-1, crosstalk between insulin-sensitive tissues, intestinal L cells and pancreatic islets to adapt to changes in insulin demand. Also acts as a myokine. Plays a protective role during liver injury, being required for maintenance of tissue regeneration. Also has a pivotal role in iron metabolism by regulating HAMP/hepcidin expression upon inflammation or bacterial infection. Through activation of IL6ST-YAP-NOTCH pathway, induces inflammation-induced epithelial regeneration. This Lama glama (Llama) protein is Interleukin-6 (IL6).